We begin with the raw amino-acid sequence, 145 residues long: Large ribosomal subunit protein uL15 (145 aa).

Residues 1–54 form a disordered region; sequence MKLNELKYTPGSKKEATRVGRGMASGKGKTATRGHKGQNSRSGGGVRPGFEGGQ. The span at 42–52 shows a compositional bias: gly residues; that stretch reads SGGGVRPGFEG.

This sequence belongs to the universal ribosomal protein uL15 family. Part of the 50S ribosomal subunit.

Functionally, binds to the 23S rRNA. The polypeptide is Large ribosomal subunit protein uL15 (Mycoplasma capricolum subsp. capricolum (strain California kid / ATCC 27343 / NCTC 10154)).